Reading from the N-terminus, the 209-residue chain is Large ribosomal subunit protein uL3 (209 aa).

The protein belongs to the universal ribosomal protein uL3 family. As to quaternary structure, part of the 50S ribosomal subunit. Forms a cluster with proteins L14 and L19.

In terms of biological role, one of the primary rRNA binding proteins, it binds directly near the 3'-end of the 23S rRNA, where it nucleates assembly of the 50S subunit. This is Large ribosomal subunit protein uL3 from Nitratidesulfovibrio vulgaris (strain DSM 19637 / Miyazaki F) (Desulfovibrio vulgaris).